Reading from the N-terminus, the 144-residue chain is Large ribosomal subunit protein uL11 (144 aa).

This sequence belongs to the universal ribosomal protein uL11 family. Part of the ribosomal stalk of the 50S ribosomal subunit. Interacts with L10 and the large rRNA to form the base of the stalk. L10 forms an elongated spine to which L12 dimers bind in a sequential fashion forming a multimeric L10(L12)X complex. One or more lysine residues are methylated.

In terms of biological role, forms part of the ribosomal stalk which helps the ribosome interact with GTP-bound translation factors. The polypeptide is Large ribosomal subunit protein uL11 (Polaromonas sp. (strain JS666 / ATCC BAA-500)).